The chain runs to 194 residues: dCTP deaminase (194 aa).

Residues 110-115 (RSSLAR), Asp128, 136-138 (VLE), Tyr171, Lys178, and Gln182 contribute to the dCTP site. The active-site Proton donor/acceptor is the Glu138.

The protein belongs to the dCTP deaminase family. In terms of assembly, homotrimer.

It catalyses the reaction dCTP + H2O + H(+) = dUTP + NH4(+). It functions in the pathway pyrimidine metabolism; dUMP biosynthesis; dUMP from dCTP (dUTP route): step 1/2. In terms of biological role, catalyzes the deamination of dCTP to dUTP. The chain is dCTP deaminase from Pasteurella multocida (strain Pm70).